Here is a 231-residue protein sequence, read N- to C-terminus: Probable transaldolase (231 aa).

Lys-83 serves as the catalytic Schiff-base intermediate with substrate.

Belongs to the transaldolase family. Type 3B subfamily.

It localises to the cytoplasm. It carries out the reaction D-sedoheptulose 7-phosphate + D-glyceraldehyde 3-phosphate = D-erythrose 4-phosphate + beta-D-fructose 6-phosphate. The protein operates within carbohydrate degradation; pentose phosphate pathway; D-glyceraldehyde 3-phosphate and beta-D-fructose 6-phosphate from D-ribose 5-phosphate and D-xylulose 5-phosphate (non-oxidative stage): step 2/3. Transaldolase is important for the balance of metabolites in the pentose-phosphate pathway. This is Probable transaldolase from Rhodospirillum centenum (strain ATCC 51521 / SW).